We begin with the raw amino-acid sequence, 939 residues long: Translation initiation factor IF-2 (939 aa).

Residues 57–274 (RLKPAAPAAP…APTKKNEQKI (218 aa)) are disordered. Composition is skewed to basic and acidic residues over residues 83–122 (MEPK…KESV) and 129–138 (LEQEPPKEEL). Composition is skewed to polar residues over residues 146-158 (ESAS…SNPL) and 170-180 (VATTLATQTDA). Residues 208 to 227 (KRSEEPAPKADRPSLEEART) are compositionally biased toward basic and acidic residues. Positions 252-262 (ARKKKKEKKKP) are enriched in basic residues. Positions 438–607 (ERPPVVTIMG…LVQSELLELK (170 aa)) constitute a tr-type G domain. The G1 stretch occupies residues 447–454 (GHVDHGKT). 447 to 454 (GHVDHGKT) serves as a coordination point for GTP. The G2 stretch occupies residues 472–476 (GITQH). The segment at 493 to 496 (DTPG) is G3. GTP is bound by residues 493-497 (DTPGH) and 547-550 (NKVD). The tract at residues 547 to 550 (NKVD) is G4. The interval 583 to 585 (SAK) is G5.

Belongs to the TRAFAC class translation factor GTPase superfamily. Classic translation factor GTPase family. IF-2 subfamily.

It is found in the cytoplasm. Functionally, one of the essential components for the initiation of protein synthesis. Protects formylmethionyl-tRNA from spontaneous hydrolysis and promotes its binding to the 30S ribosomal subunits. Also involved in the hydrolysis of GTP during the formation of the 70S ribosomal complex. The sequence is that of Translation initiation factor IF-2 from Wolinella succinogenes (strain ATCC 29543 / DSM 1740 / CCUG 13145 / JCM 31913 / LMG 7466 / NCTC 11488 / FDC 602W) (Vibrio succinogenes).